The sequence spans 390 residues: Small ribosomal subunit protein uS9m (390 aa).

Residues 368 to 390 (PRIRERKKPGQEGARRKFTWKKR) are disordered.

This sequence belongs to the universal ribosomal protein uS9 family. Component of the mitochondrial ribosome small subunit (28S) which comprises a 12S rRNA and about 30 distinct proteins.

The protein resides in the mitochondrion. The polypeptide is Small ribosomal subunit protein uS9m (Mrps9) (Mus musculus (Mouse)).